The primary structure comprises 406 residues: Argininosuccinate synthase (406 aa).

9–17 serves as a coordination point for ATP; sequence AYSGGLDTS. Tyr86 contributes to the L-citrulline binding site. Residue Gly116 coordinates ATP. Residues Thr118, Asn122, and Asp123 each coordinate L-aspartate. Asn122 serves as a coordination point for L-citrulline. Residues Arg126, Ser174, Ser183, Glu259, and Tyr271 each coordinate L-citrulline.

It belongs to the argininosuccinate synthase family. Type 1 subfamily. Homotetramer.

It localises to the cytoplasm. The catalysed reaction is L-citrulline + L-aspartate + ATP = 2-(N(omega)-L-arginino)succinate + AMP + diphosphate + H(+). Its pathway is amino-acid biosynthesis; L-arginine biosynthesis; L-arginine from L-ornithine and carbamoyl phosphate: step 2/3. This is Argininosuccinate synthase from Geobacillus thermodenitrificans (strain NG80-2).